Reading from the N-terminus, the 396-residue chain is Ribosomal RNA large subunit methyltransferase I (396 aa).

The PUA domain maps to 2 to 81 (SVRLVLTKGR…ETIDIAFFTR (80 aa)).

This sequence belongs to the methyltransferase superfamily. RlmI family.

It is found in the cytoplasm. It catalyses the reaction cytidine(1962) in 23S rRNA + S-adenosyl-L-methionine = 5-methylcytidine(1962) in 23S rRNA + S-adenosyl-L-homocysteine + H(+). Specifically methylates the cytosine at position 1962 (m5C1962) of 23S rRNA. In Enterobacter sp. (strain 638), this protein is Ribosomal RNA large subunit methyltransferase I.